The following is a 241-amino-acid chain: Prolactin-8A8 (241 aa).

The signal sequence occupies residues 1–30 (MELQFRQPHFSDALLLLLLSNLLLWEKASS). 3 disulfide bridges follow: C34–C41, C101–C217, and C234–C241. An N-linked (GlcNAc...) asparagine glycan is attached at N213.

The protein belongs to the somatotropin/prolactin family. In terms of tissue distribution, expressed specifically in the placenta. Predominantly expressed in spongiotrophoblast cells.

The protein localises to the secreted. This is Prolactin-8A8 (Prl8a8) from Mus musculus (Mouse).